Reading from the N-terminus, the 601-residue chain is Elongation factor 4 (601 aa).

The tr-type G domain maps to 5–187; that stretch reads SNIRNFSIIA…AIVERLPAPE (183 aa). GTP contacts are provided by residues 17 to 22 and 134 to 137; these read DHGKST and NKID.

The protein belongs to the TRAFAC class translation factor GTPase superfamily. Classic translation factor GTPase family. LepA subfamily.

The protein resides in the cell inner membrane. The catalysed reaction is GTP + H2O = GDP + phosphate + H(+). Its function is as follows. Required for accurate and efficient protein synthesis under certain stress conditions. May act as a fidelity factor of the translation reaction, by catalyzing a one-codon backward translocation of tRNAs on improperly translocated ribosomes. Back-translocation proceeds from a post-translocation (POST) complex to a pre-translocation (PRE) complex, thus giving elongation factor G a second chance to translocate the tRNAs correctly. Binds to ribosomes in a GTP-dependent manner. This is Elongation factor 4 from Oleidesulfovibrio alaskensis (strain ATCC BAA-1058 / DSM 17464 / G20) (Desulfovibrio alaskensis).